The following is a 1047-amino-acid chain: MPRRDDIHRILVIGSGPVVIGQAAEFDYSGSQACLSLREEGYYVVLLNSNPATIQTDHRIADRVYIEPITVEAVERIIEKEKIDAIEPHMGGQTALNLAVKLKNSGILQRYGIKIIGTPVESIELAEDREKFYEFLKAMGEPQPARYRIRRDHIDEDVASIPDIPVIVRTSFSLGGTGGSIVQNRQDLLAMAENLFRASDIDYLEVNESLEGMKEIEYEVIRDSFGNCITVCNMENLDPMGVHTGESIVVTPSQTLSDIEYQMLRDSAIRIISGLGIEGACNIQFALSEGRYYVIEVNPRTSRSSALASKATGYPIARIAAKIAAGYGLHEIKNPITKSTFAAYEPSLDYVTVKIPRWPFDKFSVDRTIGVQMKSIGEVMGIGRTFEEALMKAIASLDNAFSSNIRLHVPDDELWRLIGKPNDRRIFAIFEGLFRNFDVKRMSRLSGYDEYFIEKMRNIVEALRNMDMGRIPENLLRIKRIGIPDEIISAFCGVPADTITKYRIDRNIMPVYKRIDTCSGEFEVAVPYMYSTYEDEDETPDLSGSIMIIGSGPNRIAQGLEFDYGSVKAILALRDMGYRSIMLNSNPETVSTDFDISDALFFEPVTPEYVVNVIRRSGCAGLIVQFSGQTGQNMARRIEEILGKHIVLGTSTESIDRIEDRTVFSRVIEGLGIKQPPFAIAENENDTVRKAMGLGLPIILRSSHVIGGRSMEIIYDVDYLADRAREIFAISKNVLVSKYLENAVEMDVDFVSDGTSYSICGIIVHIEEAGVHSGDATMVYGPGIVPVDIEKKIEGIVGSMVREFRLIGLSNLQIAVRDGDVYVIELNARSSRSVPFISKATGIDWVRLAVECMIGSRIENKRMEAKSYFLKVSVFPFSKFSDMDVVYGPEMKSTGEAMYPGRTLAEALRKSLQRSISSVLITVRDEDKPRIVDIARILLEKGVKLYATAGTSKFLADHGIPTETLYRVRDRREPRILDMISSGSIDMVINTTEMTAGAVRDGFKIRRICIMRGIPLIMNINLARAYAEALGQVEVDYREIGDYLQVS.

The interval 1 to 398 (MPRRDDIHRI…ALMKAIASLD (398 aa)) is carboxyphosphate synthetic domain. ATP-binding residues include arginine 129, arginine 169, glycine 175, glycine 176, glutamate 208, leucine 210, glutamate 215, glycine 241, valine 242, histidine 243, glutamine 284, and glutamate 296. The ATP-grasp 1 domain maps to 133–325 (YEFLKAMGEP…IARIAAKIAA (193 aa)). Mg(2+) contacts are provided by glutamine 284, glutamate 296, and asparagine 298. Mn(2+)-binding residues include glutamine 284, glutamate 296, and asparagine 298. The tract at residues 399 to 539 (NAFSSNIRLH…YSTYEDEDET (141 aa)) is oligomerization domain. Residues 540–916 (PDLSGSIMII…ALRKSLQRSI (377 aa)) are carbamoyl phosphate synthetic domain. Residues 665-854 (SRVIEGLGIK…WVRLAVECMI (190 aa)) enclose the ATP-grasp 2 domain. Arginine 701, lysine 738, leucine 740, glutamate 745, glycine 770, valine 771, histidine 772, serine 773, glutamine 813, and glutamate 825 together coordinate ATP. Mg(2+) contacts are provided by glutamine 813, glutamate 825, and asparagine 827. Positions 813, 825, and 827 each coordinate Mn(2+). Positions 910–1047 (KSLQRSISSV…REIGDYLQVS (138 aa)) constitute an MGS-like domain. The tract at residues 916–1047 (ISSVLITVRD…REIGDYLQVS (132 aa)) is allosteric domain.

This sequence belongs to the CarB family. As to quaternary structure, composed of two chains; the small (or glutamine) chain promotes the hydrolysis of glutamine to ammonia, which is used by the large (or ammonia) chain to synthesize carbamoyl phosphate. Tetramer of heterodimers (alpha,beta)4. It depends on Mg(2+) as a cofactor. Mn(2+) is required as a cofactor.

It carries out the reaction hydrogencarbonate + L-glutamine + 2 ATP + H2O = carbamoyl phosphate + L-glutamate + 2 ADP + phosphate + 2 H(+). It catalyses the reaction hydrogencarbonate + NH4(+) + 2 ATP = carbamoyl phosphate + 2 ADP + phosphate + 2 H(+). Its pathway is amino-acid biosynthesis; L-arginine biosynthesis; carbamoyl phosphate from bicarbonate: step 1/1. It functions in the pathway pyrimidine metabolism; UMP biosynthesis via de novo pathway; (S)-dihydroorotate from bicarbonate: step 1/3. Its function is as follows. Large subunit of the glutamine-dependent carbamoyl phosphate synthetase (CPSase). CPSase catalyzes the formation of carbamoyl phosphate from the ammonia moiety of glutamine, carbonate, and phosphate donated by ATP, constituting the first step of 2 biosynthetic pathways, one leading to arginine and/or urea and the other to pyrimidine nucleotides. The large subunit (synthetase) binds the substrates ammonia (free or transferred from glutamine from the small subunit), hydrogencarbonate and ATP and carries out an ATP-coupled ligase reaction, activating hydrogencarbonate by forming carboxy phosphate which reacts with ammonia to form carbamoyl phosphate. The protein is Carbamoyl phosphate synthase large chain of Thermoplasma acidophilum (strain ATCC 25905 / DSM 1728 / JCM 9062 / NBRC 15155 / AMRC-C165).